The sequence spans 1057 residues: Probable E3 ubiquitin-protein ligase HERC4 (1057 aa).

7 RCC1 repeats span residues 1–51 (MLCW…FVLD), 52–101 (DGTV…ALND), 102–154 (KGQV…ALSK), 156–207 (SEVF…VLTL), 208–259 (SGAI…ALTK), 261–311 (GGVF…AFVP), and 313–368 (SGRI…KRIF). Residues 730–1057 (KNIDYKKPLK…IDHNEGFSLI (328 aa)) form the HECT domain. Cys1025 (glycyl thioester intermediate) is an active-site residue.

Expressed in brain and testis and detected in heart and placenta.

The protein localises to the cytoplasm. The protein resides in the cytosol. It carries out the reaction S-ubiquitinyl-[E2 ubiquitin-conjugating enzyme]-L-cysteine + [acceptor protein]-L-lysine = [E2 ubiquitin-conjugating enzyme]-L-cysteine + N(6)-ubiquitinyl-[acceptor protein]-L-lysine.. It participates in protein modification; protein ubiquitination. Probable E3 ubiquitin-protein ligase involved in either protein trafficking or in the distribution of cellular structures. Required for spermatozoon maturation and fertility, and for the removal of the cytoplasmic droplet of the spermatozoon. E3 ubiquitin-protein ligases accept ubiquitin from an E2 ubiquitin-conjugating enzyme in the form of a thioester and then directly transfer it to targeted substrates. The chain is Probable E3 ubiquitin-protein ligase HERC4 (HERC4) from Homo sapiens (Human).